The primary structure comprises 275 residues: Large ribosomal subunit protein uL2 (275 aa).

The tract at residues 224–257 (AMNPIDHPHGGGEGRTAAGRDPVSPWGTPTKGFR) is disordered.

The protein belongs to the universal ribosomal protein uL2 family. In terms of assembly, part of the 50S ribosomal subunit. Forms a bridge to the 30S subunit in the 70S ribosome.

In terms of biological role, one of the primary rRNA binding proteins. Required for association of the 30S and 50S subunits to form the 70S ribosome, for tRNA binding and peptide bond formation. It has been suggested to have peptidyltransferase activity; this is somewhat controversial. Makes several contacts with the 16S rRNA in the 70S ribosome. The protein is Large ribosomal subunit protein uL2 of Burkholderia mallei (strain NCTC 10247).